The following is a 61-amino-acid chain: DNA-directed RNA polymerase subunit Rpo10 (61 aa).

4 residues coordinate Zn(2+): C6, C9, C42, and C43.

The protein belongs to the archaeal Rpo10/eukaryotic RPB10 RNA polymerase subunit family. In terms of assembly, part of the RNA polymerase complex. Requires Zn(2+) as cofactor.

It is found in the cytoplasm. The catalysed reaction is RNA(n) + a ribonucleoside 5'-triphosphate = RNA(n+1) + diphosphate. In terms of biological role, DNA-dependent RNA polymerase (RNAP) catalyzes the transcription of DNA into RNA using the four ribonucleoside triphosphates as substrates. This chain is DNA-directed RNA polymerase subunit Rpo10, found in Methanothrix thermoacetophila (strain DSM 6194 / JCM 14653 / NBRC 101360 / PT) (Methanosaeta thermophila).